Reading from the N-terminus, the 388-residue chain is Succinate--CoA ligase [ADP-forming] subunit beta (388 aa).

Positions 9–245 (KELLAGYGLP…KSQENERELK (237 aa)) constitute an ATP-grasp domain. Residues K46, 53–55 (GRG), E100, Y103, and E108 each bind ATP. Mg(2+)-binding residues include N200 and D214. Residues N265 and 322-324 (GIV) contribute to the substrate site.

The protein belongs to the succinate/malate CoA ligase beta subunit family. Heterotetramer of two alpha and two beta subunits. Mg(2+) serves as cofactor.

It catalyses the reaction succinate + ATP + CoA = succinyl-CoA + ADP + phosphate. The enzyme catalyses GTP + succinate + CoA = succinyl-CoA + GDP + phosphate. It functions in the pathway carbohydrate metabolism; tricarboxylic acid cycle; succinate from succinyl-CoA (ligase route): step 1/1. Its function is as follows. Succinyl-CoA synthetase functions in the citric acid cycle (TCA), coupling the hydrolysis of succinyl-CoA to the synthesis of either ATP or GTP and thus represents the only step of substrate-level phosphorylation in the TCA. The beta subunit provides nucleotide specificity of the enzyme and binds the substrate succinate, while the binding sites for coenzyme A and phosphate are found in the alpha subunit. The polypeptide is Succinate--CoA ligase [ADP-forming] subunit beta (Neisseria meningitidis serogroup C (strain 053442)).